The following is a 1400-amino-acid chain: DNA topoisomerase 2 (1400 aa).

The segment covering 1–30 (MSSFESDSASDAESAFSDASSDFTPSSSVK) has biased composition (low complexity). Residues 1-57 (MSSFESDSASDAESAFSDASSDFTPSSSVKSKGKVPLRDSTNTTAQPSAPATGDASD) form a disordered region. The segment covering 39 to 57 (DSTNTTAQPSAPATGDASD) has biased composition (polar residues). ATP contacts are provided by residues Asn-117, Asn-146, 174–176 (SSN), and 187–194 (GRNGYGAK). Positions 379–386 (TKKEKGKK) are interaction with DNA. 415–417 (QTK) contributes to the ATP binding site. The Toprim domain maps to 497–613 (CTLILTEGDS…GLLEIPGFLL (117 aa)). Mg(2+)-binding residues include Glu-503, Asp-582, and Asp-584. The region spanning 749–1214 (IPSILDGFKP…SAKDLWNSDL (466 aa)) is the Topo IIA-type catalytic domain. Residue Tyr-839 is the O-(5'-phospho-DNA)-tyrosine intermediate of the active site. Residues 1019–1028 (KLISSISLSN) form an interaction with DNA region. A disordered region spans residues 1235–1400 (FGPTAKTSTR…NESDEDYMSE (166 aa)). Positions 1262–1271 (SSTPKASTPT) are enriched in low complexity. The span at 1312–1321 (PKRKTPKSKP) shows a compositional bias: basic residues. A compositionally biased stretch (acidic residues) spans 1389–1400 (DGNESDEDYMSE).

The protein belongs to the type II topoisomerase family. As to quaternary structure, homodimer. It depends on Mg(2+) as a cofactor. Mn(2+) is required as a cofactor. Ca(2+) serves as cofactor.

It is found in the nucleus. The catalysed reaction is ATP-dependent breakage, passage and rejoining of double-stranded DNA.. Functionally, control of topological states of DNA by transient breakage and subsequent rejoining of DNA strands. Topoisomerase II makes double-strand breaks. This chain is DNA topoisomerase 2 (TOP2), found in Meyerozyma guilliermondii (strain ATCC 6260 / CBS 566 / DSM 6381 / JCM 1539 / NBRC 10279 / NRRL Y-324) (Yeast).